Reading from the N-terminus, the 355-residue chain is Histidinol-phosphate aminotransferase 2 (355 aa).

N6-(pyridoxal phosphate)lysine is present on lysine 213.

This sequence belongs to the class-II pyridoxal-phosphate-dependent aminotransferase family. Histidinol-phosphate aminotransferase subfamily. Homodimer. Pyridoxal 5'-phosphate serves as cofactor.

It carries out the reaction L-histidinol phosphate + 2-oxoglutarate = 3-(imidazol-4-yl)-2-oxopropyl phosphate + L-glutamate. It participates in amino-acid biosynthesis; L-histidine biosynthesis; L-histidine from 5-phospho-alpha-D-ribose 1-diphosphate: step 7/9. This is Histidinol-phosphate aminotransferase 2 from Burkholderia lata (strain ATCC 17760 / DSM 23089 / LMG 22485 / NCIMB 9086 / R18194 / 383).